Here is a 306-residue protein sequence, read N- to C-terminus: Ribosomal RNA small subunit methyltransferase H (306 aa).

S-adenosyl-L-methionine-binding positions include G33–Y35, D51, F78, D96, and Q103.

The protein belongs to the methyltransferase superfamily. RsmH family.

It is found in the cytoplasm. It catalyses the reaction cytidine(1402) in 16S rRNA + S-adenosyl-L-methionine = N(4)-methylcytidine(1402) in 16S rRNA + S-adenosyl-L-homocysteine + H(+). Specifically methylates the N4 position of cytidine in position 1402 (C1402) of 16S rRNA. The polypeptide is Ribosomal RNA small subunit methyltransferase H (Rickettsia felis (strain ATCC VR-1525 / URRWXCal2) (Rickettsia azadi)).